The primary structure comprises 78 residues: Large ribosomal subunit protein bL28 (78 aa).

The disordered stretch occupies residues 1–21 (MSRVCQVTGKRPVSGNNRSHA).

It belongs to the bacterial ribosomal protein bL28 family.

This chain is Large ribosomal subunit protein bL28, found in Sodalis glossinidius (strain morsitans).